Reading from the N-terminus, the 526-residue chain is Cytochrome P450 monooxygenase milC (526 aa).

The chain crosses the membrane as a helical span at residues 2–20 (AIHAAYIFIAATLIALYVA). Heme is bound at residue cysteine 470.

Belongs to the cytochrome P450 family. Heme is required as a cofactor.

The protein localises to the membrane. It carries out the reaction cordypyrone A + reduced [NADPH--hemoprotein reductase] + O2 = cordypyrone B + oxidized [NADPH--hemoprotein reductase] + H2O + H(+). Its pathway is secondary metabolite biosynthesis. Its function is as follows. Cytochrome P450 monooxygenase; part of the gene cluster that mediates the biosynthesis of cordypyrones A and B, 2 pyrones that show modest activities against pathogenic bacteria including methicillin-resistant Staphylococcus aureus (MRSA), Mycobacterium tuberculosis and Bacillus cereus. The HR-PKS milA catalyzes the formation of cordypyrones A via condensation of one acetate with 10 malonate units. Since milA lacks an enoyl reductase domain, the 2 beta-keto processing domains DH and KR of milA collaborate with the trans-enoyl reductase milB to catalyze the different levels of reduction. The cytochrome P450 monooxygenase milC then hydroxylates the C-22 of cordypyrones A to yield cordypyrones B. The chain is Cytochrome P450 monooxygenase milC from Cordyceps militaris (strain CM01) (Caterpillar fungus).